Reading from the N-terminus, the 410-residue chain is Platelet-activating factor acetylhydrolase IB subunit alpha (410 aa).

The tract at residues 1 to 38 (MVLSQRQRDELNRAIADYLRSNGYEEAYSVFKKEAELD) is required for self-association and interaction with PAFAH1B2 and PAFAH1B3. An interaction with NDE1 region spans residues 1–66 (MVLSQRQRDE…SVIRLQKKVM (66 aa)). The tract at residues 1 to 102 (MVLSQRQRDE…EWIPRPPEKY (102 aa)) is interaction with NDEL1. The 33-residue stretch at 7-39 (QRDELNRAIADYLRSNGYEEAYSVFKKEAELDM) folds into the LisH domain. K53 carries the N6-acetyllysine modification. Positions 56-82 (TSVIRLQKKVMELESKLNEAKEEFTSG) form a coiled coil. The tract at residues 83–410 (GPLGQKRDPK…DQTVKVWECR (328 aa)) is interaction with dynein and dynactin. WD repeat units follow at residues 106–147 (GHRS…RTLK), 148–187 (GHTDSVQDISFDHSGKLLASCSADMTIKLWDFQGFECIRT), 190–229 (GHDHNVSSVAIMPNGDHIVSAARDKTIKMWEVQTGYCVKT), 232–271 (GHREWVRMVRPNQDGTLIASCSNDQTVRVWVVATKECKAE), 274–333 (EHEH…CLMT), 336–377 (GHDN…KTLN), and 378–410 (AHEHFVTSLDFHKTAPYVVTGSVDQTVKVWECR). At S109 the chain carries Phosphoserine. The interaction with DCX stretch occupies residues 367–409 (YKNKRCMKTLNAHEHFVTSLDFHKTAPYVVTGSVDQTVKVWEC). The segment at 388–410 (FHKTAPYVVTGSVDQTVKVWECR) is interaction with NDEL1.

Belongs to the WD repeat LIS1/nudF family. As to quaternary structure, can self-associate. Component of the cytosolic PAF-AH (I) heterotetrameric enzyme, which is composed of PAFAH1B1 (beta), PAFAH1B2 (alpha2) and PAFAH1B3 (alpha1) subunits. The catalytic activity of the enzyme resides in the alpha1 (PAFAH1B3) and alpha2 (PAFAH1B2) subunits, whereas the beta subunit (PAFAH1B1) has regulatory activity. Trimer formation is not essential for the catalytic activity. Interacts with the catalytic dimer of PAF-AH (I) heterotetrameric enzyme: interacts with PAFAH1B2 homodimer (alpha2/alpha2 homodimer), PAFAH1B3 homodimer (alpha1/alpha1 homodimer) and PAFAH1B2-PAFAH1B3 heterodimer (alpha2/alpha1 heterodimer). Interacts with DCX, dynein, dynactin, IQGAP1, KATNB1, NDE1, NDEL1, NUDC and RSN. Interacts with DISC1, and this interaction is enhanced by NDEL1. Interacts with DAB1 when DAB1 is phosphorylated in response to RELN/reelin signaling. Interacts with INTS13. Interacts with DCDC1.

The protein resides in the cytoplasm. It is found in the cytoskeleton. It localises to the microtubule organizing center. The protein localises to the centrosome. Its subcellular location is the spindle. The protein resides in the nucleus membrane. Its function is as follows. Regulatory subunit (beta subunit) of the cytosolic type I platelet-activating factor (PAF) acetylhydrolase (PAF-AH (I)), an enzyme that catalyzes the hydrolyze of the acetyl group at the sn-2 position of PAF and its analogs and participates in PAF inactivation. Regulates the PAF-AH (I) activity in a catalytic dimer composition-dependent manner. Positively regulates the activity of the minus-end directed microtubule motor protein dynein. May enhance dynein-mediated microtubule sliding by targeting dynein to the microtubule plus end. Required for several dynein- and microtubule-dependent processes such as the maintenance of Golgi integrity, the peripheral transport of microtubule fragments and the coupling of the nucleus and centrosome. Required during brain development for the proliferation of neuronal precursors and the migration of newly formed neurons from the ventricular/subventricular zone toward the cortical plate. Neuronal migration involves a process called nucleokinesis, whereby migrating cells extend an anterior process into which the nucleus subsequently translocates. During nucleokinesis dynein at the nuclear surface may translocate the nucleus towards the centrosome by exerting force on centrosomal microtubules. Also required for proper activation of Rho GTPases and actin polymerization at the leading edge of locomoting cerebellar neurons and postmigratory hippocampal neurons in response to calcium influx triggered via NMDA receptors. May also play a role in other forms of cell locomotion including the migration of fibroblasts during wound healing. Required for dynein recruitment to microtubule plus ends and BICD2-bound cargos. May modulate the Reelin pathway through interaction of the PAF-AH (I) catalytic dimer with VLDLR. This Sus scrofa (Pig) protein is Platelet-activating factor acetylhydrolase IB subunit alpha.